A 90-amino-acid polypeptide reads, in one-letter code: Actobindin-B/C (90 aa).

WH2 domains follow at residues 4 to 21 and 40 to 57; these read TANP…LKHA and DHSS…LKHV. The segment at 57–90 is disordered; sequence VETQDRSAPVTEGATVKSNNHSALLGEIKSKAQE.

As to quaternary structure, monomer.

Functionally, is able to bind two actin monomers at high concentrations of G-actin. Inhibits actin polymerization by sequestering G-actin and stabilizing actin dimers. The protein is Actobindin-B/C (abnB) of Dictyostelium discoideum (Social amoeba).